Reading from the N-terminus, the 448-residue chain is B box and SPRY domain-containing protein (448 aa).

Residues 1 to 18 show a composition bias toward low complexity; that stretch reads MSSDVSGTESGSESGPES. The interval 1–58 is disordered; that stretch reads MSSDVSGTESGSESGPESVPEPVPEPGPEPESEPGPGPAPGPGPGPAPGPGPGLGREP. Residues 19–51 are compositionally biased toward pro residues; sequence VPEPVPEPGPEPESEPGPGPAPGPGPGPAPGPG. Residues 63–111 form a B box-type zinc finger; that stretch reads QPCQLCPEHGKPLSWFCLSERRPVCATCAGFGGRCHRHRIRRAEEHAEE. The B30.2/SPRY domain maps to 257-448; that stretch reads SPLLTQLWAT…VADQVISIVC (192 aa).

In terms of assembly, interacts with TRPV5 and TRPV6. Interacts with YWHAZ/14-3-3 protein zeta. Predominantly expressed in testis. Expressed in brain at low levels.

Its subcellular location is the cytoplasm. The protein resides in the membrane. In terms of biological role, may regulate epithelial calcium transport by inhibiting TRPV5 activity. The sequence is that of B box and SPRY domain-containing protein (Bspry) from Rattus norvegicus (Rat).